A 553-amino-acid chain; its full sequence is CTP synthase (553 aa).

An amidoligase domain region spans residues 1–270; that stretch reads MTKFVFVTGG…DRIICEELRI (270 aa). S13 lines the CTP pocket. Position 13 (S13) interacts with UTP. ATP-binding positions include 14–19 and D71; that span reads SLGKGI. Mg(2+)-binding residues include D71 and E144. CTP contacts are provided by residues 151–153, 191–196, and K227; these read DIE and KTKPTQ. UTP is bound by residues 191 to 196 and K227; that span reads KTKPTQ. The Glutamine amidotransferase type-1 domain occupies 295–547; sequence TIGMVGKYVD…VEAALAHQQN (253 aa). G356 contributes to the L-glutamine binding site. The active-site Nucleophile; for glutamine hydrolysis is the C383. Residues 384–387, E407, and R473 contribute to the L-glutamine site; that span reads LGMQ. Residues H520 and E522 contribute to the active site.

This sequence belongs to the CTP synthase family. As to quaternary structure, homotetramer.

The enzyme catalyses UTP + L-glutamine + ATP + H2O = CTP + L-glutamate + ADP + phosphate + 2 H(+). It carries out the reaction L-glutamine + H2O = L-glutamate + NH4(+). It catalyses the reaction UTP + NH4(+) + ATP = CTP + ADP + phosphate + 2 H(+). It functions in the pathway pyrimidine metabolism; CTP biosynthesis via de novo pathway; CTP from UDP: step 2/2. Its activity is regulated as follows. Allosterically activated by GTP, when glutamine is the substrate; GTP has no effect on the reaction when ammonia is the substrate. The allosteric effector GTP functions by stabilizing the protein conformation that binds the tetrahedral intermediate(s) formed during glutamine hydrolysis. Inhibited by the product CTP, via allosteric rather than competitive inhibition. Functionally, catalyzes the ATP-dependent amination of UTP to CTP with either L-glutamine or ammonia as the source of nitrogen. Regulates intracellular CTP levels through interactions with the four ribonucleotide triphosphates. This is CTP synthase from Ralstonia pickettii (strain 12J).